The primary structure comprises 148 residues: UPF0260 protein mll2411 (148 aa).

The protein belongs to the UPF0260 family.

This Mesorhizobium japonicum (strain LMG 29417 / CECT 9101 / MAFF 303099) (Mesorhizobium loti (strain MAFF 303099)) protein is UPF0260 protein mll2411.